A 292-amino-acid chain; its full sequence is Formamidopyrimidine-DNA glycosylase (292 aa).

Residue Pro-2 is the Schiff-base intermediate with DNA of the active site. Catalysis depends on Glu-3, which acts as the Proton donor. Lys-61 acts as the Proton donor; for beta-elimination activity in catalysis. 3 residues coordinate DNA: His-96, Arg-115, and Lys-161. The segment at 247–281 (SAYGQEDRPCPRCGTAIRREKFMNRSSFSCPKCQP) adopts an FPG-type zinc-finger fold. Arg-271 (proton donor; for delta-elimination activity) is an active-site residue.

It belongs to the FPG family. In terms of assembly, monomer. Zn(2+) is required as a cofactor.

The catalysed reaction is Hydrolysis of DNA containing ring-opened 7-methylguanine residues, releasing 2,6-diamino-4-hydroxy-5-(N-methyl)formamidopyrimidine.. The enzyme catalyses 2'-deoxyribonucleotide-(2'-deoxyribose 5'-phosphate)-2'-deoxyribonucleotide-DNA = a 3'-end 2'-deoxyribonucleotide-(2,3-dehydro-2,3-deoxyribose 5'-phosphate)-DNA + a 5'-end 5'-phospho-2'-deoxyribonucleoside-DNA + H(+). Functionally, involved in base excision repair of DNA damaged by oxidation or by mutagenic agents. Acts as a DNA glycosylase that recognizes and removes damaged bases. Has a preference for oxidized purines, such as 7,8-dihydro-8-oxoguanine (8-oxoG). Has AP (apurinic/apyrimidinic) lyase activity and introduces nicks in the DNA strand. Cleaves the DNA backbone by beta-delta elimination to generate a single-strand break at the site of the removed base with both 3'- and 5'-phosphates. This Rhodococcus jostii (strain RHA1) protein is Formamidopyrimidine-DNA glycosylase.